Here is a 423-residue protein sequence, read N- to C-terminus: UDP-N-acetylglucosamine 1-carboxyvinyltransferase 1 (423 aa).

Lys-23–Asn-24 is a binding site for phosphoenolpyruvate. Arg-96 lines the UDP-N-acetyl-alpha-D-glucosamine pocket. The active-site Proton donor is the Cys-120. Cys-120 is modified (2-(S-cysteinyl)pyruvic acid O-phosphothioketal). UDP-N-acetyl-alpha-D-glucosamine-binding positions include Arg-125–Leu-129, Asp-309, and Val-331.

Belongs to the EPSP synthase family. MurA subfamily.

It is found in the cytoplasm. The enzyme catalyses phosphoenolpyruvate + UDP-N-acetyl-alpha-D-glucosamine = UDP-N-acetyl-3-O-(1-carboxyvinyl)-alpha-D-glucosamine + phosphate. The protein operates within cell wall biogenesis; peptidoglycan biosynthesis. In terms of biological role, cell wall formation. Adds enolpyruvyl to UDP-N-acetylglucosamine. The sequence is that of UDP-N-acetylglucosamine 1-carboxyvinyltransferase 1 from Streptococcus mutans serotype c (strain ATCC 700610 / UA159).